Reading from the N-terminus, the 445-residue chain is Phosphoglucosamine mutase (445 aa).

Ser99 acts as the Phosphoserine intermediate in catalysis. Mg(2+) is bound by residues Ser99, Asp242, Asp244, and Asp246. Position 99 is a phosphoserine (Ser99).

This sequence belongs to the phosphohexose mutase family. The cofactor is Mg(2+). Post-translationally, activated by phosphorylation.

The catalysed reaction is alpha-D-glucosamine 1-phosphate = D-glucosamine 6-phosphate. In terms of biological role, catalyzes the conversion of glucosamine-6-phosphate to glucosamine-1-phosphate. The chain is Phosphoglucosamine mutase from Sulfurovum sp. (strain NBC37-1).